Consider the following 459-residue polypeptide: Glutamate--tRNA ligase 2 (459 aa).

Residues 8-18 (PSPTGYLHIGG) carry the 'HIGH' region motif. A 'KMSKS' region motif is present at residues 237-241 (KLSKR). K240 is a binding site for ATP.

Belongs to the class-I aminoacyl-tRNA synthetase family. Glutamate--tRNA ligase type 1 subfamily. Monomer.

The protein localises to the cytoplasm. It carries out the reaction tRNA(Glu) + L-glutamate + ATP = L-glutamyl-tRNA(Glu) + AMP + diphosphate. Catalyzes the attachment of glutamate to tRNA(Glu) in a two-step reaction: glutamate is first activated by ATP to form Glu-AMP and then transferred to the acceptor end of tRNA(Glu). The protein is Glutamate--tRNA ligase 2 of Campylobacter concisus (strain 13826).